The sequence spans 211 residues: MSDSSDDEITLSKESLSALQDFYKSREVEQQDKFEISEDWQLSQFWYEEETSKFVANVIEQETIGGNVVVCLSTPSIYKVLHKNNNLLLNNNLFEYDKRFDVYGEKFHFYDYNNPEDGISEQLKGNVDYICLDPPFLSEECIEKVAKTIALLRKPTTRLLLLTGRIQWNNIQKYLPEMMICEFEPKHPRLQNDFFCCSNYHSKLLGLENKK.

This sequence belongs to the class I-like SAM-binding methyltransferase superfamily. EFM5 family.

The protein localises to the cytoplasm. Its function is as follows. S-adenosyl-L-methionine-dependent protein-lysine N-methyltransferase that methylates elongation factor 1-alpha. This is Protein-lysine N-methyltransferase DDB_G0272708 from Dictyostelium discoideum (Social amoeba).